Reading from the N-terminus, the 443-residue chain is Sperm-associated antigen 4 protein (443 aa).

A compositionally biased stretch (low complexity) spans 1 to 36; sequence MRRSPRSGSAASSHNHTPNFYSENSNSSHSATSGDS. The segment at 1–107 is disordered; the sequence is MRRSPRSGSA…VRGGASEPSG (107 aa). A run of 2 helical transmembrane segments spans residues 137–157 and 168–188; these read FLSL…DGLV and FLFT…WGLL. Residues 203-244 adopt a coiled-coil conformation; sequence TLSQYHHRVHSQGQQLQQLQAELNKLHKEVSSVRAAHSERVA. One can recognise an SUN domain in the interval 267–427; sequence GASIDLEKTS…YRVRAHGVRT (161 aa).

Self-associates. Interacts with ODF1. May associate with microtubules. Interacts with SUN3 and SYNE1; suggesting the formation of a spermatogenesis-specific LINC complex; a SUN domain-based heterotrimer of SPAG4 and SUN3 may associate with SYNE1. Interacts with SEPT12 and LMNB1; during spermatogenesis. Isoform 1 is testis specific and is exclusively expressed in spermatids.

Its subcellular location is the membrane. It is found in the cytoplasm. The protein localises to the cytoskeleton. The protein resides in the nucleus envelope. It localises to the nucleus inner membrane. Its subcellular location is the flagellum axoneme. In terms of biological role, involved in spermatogenesis. Required for sperm head formation but not required to establish and maintain general polarity of the sperm head. Required for anchoring and organization of the manchette. Required for targeting of SUN3 and probably SYNE1 through a probable SUN1:SYNE3 LINC complex to the nuclear envelope and involved in accurate posterior sperm head localization of the complex. May anchor SUN3 the nuclear envelope. Involved in maintenance of the nuclear envelope integrity. May assist the organization and assembly of outer dense fibers (ODFs), a specific structure of the sperm tail. This chain is Sperm-associated antigen 4 protein (Spag4), found in Mus musculus (Mouse).